The primary structure comprises 279 residues: Large ribosomal subunit protein uL2 (279 aa).

2 disordered regions span residues 34 to 58 and 225 to 279; these read LRPL…GGGH and VMNP…KNKR. Residues 251–268 are compositionally biased toward basic and acidic residues; it reads GKPEGRTRRPNKESDKLI. Basic residues predominate over residues 269–279; it reads VRRRRTGKNKR.

It belongs to the universal ribosomal protein uL2 family. Part of the 50S ribosomal subunit. Forms a bridge to the 30S subunit in the 70S ribosome.

One of the primary rRNA binding proteins. Required for association of the 30S and 50S subunits to form the 70S ribosome, for tRNA binding and peptide bond formation. It has been suggested to have peptidyltransferase activity; this is somewhat controversial. Makes several contacts with the 16S rRNA in the 70S ribosome. The polypeptide is Large ribosomal subunit protein uL2 (Micrococcus luteus (strain ATCC 4698 / DSM 20030 / JCM 1464 / CCM 169 / CCUG 5858 / IAM 1056 / NBRC 3333 / NCIMB 9278 / NCTC 2665 / VKM Ac-2230) (Micrococcus lysodeikticus)).